The following is a 261-amino-acid chain: Putative carbamate hydrolase RutD (261 aa).

Residues 14–119 (PTILLSSGLG…LINAWSKADP (106 aa)) form the AB hydrolase-1 domain.

This sequence belongs to the AB hydrolase superfamily. Hydrolase RutD family.

It catalyses the reaction carbamate + 2 H(+) = NH4(+) + CO2. In terms of biological role, involved in pyrimidine catabolism. May facilitate the hydrolysis of carbamate, a reaction that can also occur spontaneously. In Agrobacterium fabrum (strain C58 / ATCC 33970) (Agrobacterium tumefaciens (strain C58)), this protein is Putative carbamate hydrolase RutD.